The chain runs to 237 residues: uncharacterized protein (237 aa).

One can recognise an N-acetyltransferase domain in the interval 119-237; sequence VTVRRLTPTD…PAGLDGGLPA (119 aa).

This is an uncharacterized protein from Streptomyces virginiae (Streptomyces cinnamonensis).